Reading from the N-terminus, the 147-residue chain is 16 kDa phloem protein 2 (147 aa).

The region spanning 1–103 (MPHGTLEVVL…FVEGSIPPTA (103 aa)) is the C2 domain. Residues D20, D26, D73, D75, and D81 each coordinate Ca(2+). Residues 126 to 147 (ENRSRGMDEESYGGWKNSEASY) form a disordered region.

The cofactor is Ca(2+).

Binds to both sense and antisense RNA. Can also bind sheared DNA and dodecamer DNA with a low affinity. Interacts with mesophyll plasmodesmata to mediate its own cell-to-cell transport and potentiate RNA trafficking. May play a role in plant defense signaling. In Arabidopsis thaliana (Mouse-ear cress), this protein is 16 kDa phloem protein 2.